We begin with the raw amino-acid sequence, 365 residues long: tRNA (guanine(6)-N2)-methyltransferase (365 aa).

The THUMP domain occupies 69-182; it reads NENSRLLHRV…KDVFFLGIDT (114 aa). S-adenosyl-L-methionine is bound by residues 198-202, 228-230, E248, 276-277, and N293; these read HPAHL, SGT, and DA.

It belongs to the methyltransferase superfamily. In terms of assembly, monomer in solution.

The protein resides in the cytoplasm. It catalyses the reaction guanosine(6) in tRNA + S-adenosyl-L-methionine = N(2)-methylguanosine(6) in tRNA + S-adenosyl-L-homocysteine + H(+). In terms of biological role, S-adenosyl-L-methionine-dependent methyltransferase that catalyzes the methylation of the guanosine nucleotide at position 6 (m2G6) in tRNA(Phe). The polypeptide is tRNA (guanine(6)-N2)-methyltransferase (Pyrococcus furiosus (strain ATCC 43587 / DSM 3638 / JCM 8422 / Vc1)).